The sequence spans 1914 residues: Autophagy-related protein 2 homolog A (1914 aa).

Residues 14 to 112 (ERVCRYLLQH…LTLQPRQGSG (99 aa)) form the Chorein N-terminal domain. 4 positions are modified to phosphoserine: Ser-764, Ser-869, Ser-875, and Ser-877. Positions 1222–1243 (DLHPPPRPPSPTEIAGQKLSES) are disordered. 3 positions are modified to phosphoserine: Ser-1246, Ser-1282, and Ser-1290. The interval 1299–1337 (GERSGAQAPLPPPGASSHTLGSKAKEHENEEEGDGDTLD) is disordered. Residues 1327 to 1337 (NEEEGDGDTLD) show a composition bias toward acidic residues. The WIPI-interacting stretch occupies residues 1337 to 1383 (DSDEFCILDAPGLGIAPRDGEPIVTQLHPGPIIVHDGHFSQPLGSTD). A Phosphoserine modification is found at Ser-1381. Disordered stretches follow at residues 1427 to 1452 (LTGP…TQGG), 1589 to 1634 (MVPG…SSSD), and 1803 to 1822 (RSLQ…QPAD). Residues 1429–1446 (GPRVSPSRSSGPNRPQNS) are compositionally biased toward low complexity.

The protein belongs to the ATG2 family. As to quaternary structure, interacts with ATG9A (via C-terminus). Interacts with TMEM41B. Interacts with VMP1.

It localises to the preautophagosomal structure membrane. The protein localises to the lipid droplet. Its subcellular location is the endoplasmic reticulum membrane. The catalysed reaction is a 1,2-diacyl-sn-glycero-3-phospho-L-serine(in) = a 1,2-diacyl-sn-glycero-3-phospho-L-serine(out). It carries out the reaction a 1,2-diacyl-sn-glycero-3-phosphoethanolamine(in) = a 1,2-diacyl-sn-glycero-3-phosphoethanolamine(out). Its function is as follows. Lipid transfer protein involved in autophagosome assembly. Tethers the edge of the isolation membrane (IM) to the endoplasmic reticulum (ER) and mediates direct lipid transfer from ER to IM for IM expansion. Binds to the ER exit site (ERES), which is the membrane source for autophagosome formation, and extracts phospholipids from the membrane source and transfers them to ATG9 (ATG9A or ATG9B) to the IM for membrane expansion. Lipid transfer activity is enhanced by WIPI1 and WDR45/WIPI4, which promote ATG2A-association with phosphatidylinositol 3-monophosphate (PI3P)-containing membranes. Also regulates lipid droplets morphology and distribution within the cell. (Microbial infection) Mediates the intracellular lifestyle of Cryptococcus neoformans by supporting infection. The sequence is that of Autophagy-related protein 2 homolog A from Mus musculus (Mouse).